We begin with the raw amino-acid sequence, 370 residues long: Actin-related protein 2/3 complex subunit 1A (370 aa).

WD repeat units follow at residues 6 to 45, 50 to 89, 140 to 179, 202 to 241, 244 to 284, and 322 to 365; these read FLLE…WVKA, EHNG…WKPT, PIRS…VDEK, GTGG…QVST, TEFL…TFVS, and LHQN…SSIQ.

It belongs to the WD repeat ARPC1 family. In terms of assembly, probable component of the Arp2/3 complex in which it may replace ARPC1B. In addition to its role in the cytoplasmic cytoskeleton, the Arp2/3 complex also promotes actin polymerization in the nucleus, thereby regulating gene transcription and repair of damaged DNA.

It is found in the cytoplasm. The protein localises to the cytoskeleton. The protein resides in the nucleus. Probably functions as a component of the Arp2/3 complex which is involved in regulation of actin polymerization and together with an activating nucleation-promoting factor (NPF) mediates the formation of branched actin networks. The protein is Actin-related protein 2/3 complex subunit 1A (ARPC1A) of Homo sapiens (Human).